We begin with the raw amino-acid sequence, 585 residues long: YTH domain-containing family protein 3 (585 aa).

Disordered stretches follow at residues 1–51 (MSAT…SYPP), 244–277 (KPAKPQPKLKPKGNVGIGGSAVPPPPIKHNMNIG), and 304–350 (PQPL…QPQL). The residue at position 2 (S2) is an N-acetylserine. A compositionally biased stretch (polar residues) spans 15–24 (NKVSVQNGSI). S23 is subject to Phosphoserine. A compositionally biased stretch (basic residues) spans 244–254 (KPAKPQPKLKP). A compositionally biased stretch (low complexity) spans 329–350 (QQQQGPQPQAQPHQVQSQQPQL). Positions 416–550 (GRVFIIKSYS…EKAKQVLKII (135 aa)) constitute a YTH domain. RNA contacts are provided by residues 422–424 (KSY), D428, 438–439 (WC), N468, W492, and W497.

This sequence belongs to the YTHDF family. YTHDF3 subfamily. Interacts with CNOT1; promoting recruitment of the CCR4-NOT complex. Interacts with YTHDF1. Interacts with YTHDF2. Interacts with PAN3.

Its subcellular location is the cytoplasm. It localises to the cytosol. The protein resides in the P-body. It is found in the stress granule. Specifically recognizes and binds N6-methyladenosine (m6A)-containing RNAs, and regulates their stability. M6A is a modification present at internal sites of mRNAs and some non-coding RNAs and plays a role in mRNA stability and processing. Acts as a regulator of mRNA stability by promoting degradation of m6A-containing mRNAs via interaction with the CCR4-NOT complex or PAN3. The YTHDF paralogs (YTHDF1, YTHDF2 and YTHDF3) share m6A-containing mRNAs targets and act redundantly to mediate mRNA degradation and cellular differentiation. Acts as a negative regulator of type I interferon response by down-regulating interferon-stimulated genes (ISGs) expression: acts by binding to FOXO3 mRNAs. Binds to FOXO3 mRNAs independently of METTL3-mediated m6A modification. Can also act as a regulator of mRNA stability in cooperation with YTHDF2 by binding to m6A-containing mRNA and promoting their degradation. Recognizes and binds m6A-containing circular RNAs (circRNAs); circRNAs are generated through back-splicing of pre-mRNAs, a non-canonical splicing process promoted by dsRNA structures across circularizing exons. Promotes formation of phase-separated membraneless compartments, such as P-bodies or stress granules, by undergoing liquid-liquid phase separation upon binding to mRNAs containing multiple m6A-modified residues: polymethylated mRNAs act as a multivalent scaffold for the binding of YTHDF proteins, juxtaposing their disordered regions and thereby leading to phase separation. The resulting mRNA-YTHDF complexes then partition into different endogenous phase-separated membraneless compartments, such as P-bodies, stress granules or neuronal RNA granules. May also recognize and bind N1-methyladenosine (m1A)-containing mRNAs: inhibits trophoblast invasion by binding to m1A-methylated transcripts of IGF1R, promoting their degradation. The polypeptide is YTH domain-containing family protein 3 (Mus musculus (Mouse)).